The primary structure comprises 384 residues: Cytochrome b (384 aa).

4 helical membrane-spanning segments follow: residues 32 to 52 (FGFL…FLAI), 76 to 98 (WLLR…IHIS), 113 to 133 (TWVV…MGYV), and 179 to 199 (FFSF…VHMA). 2 residues coordinate heme b: H82 and H96. Residues H183 and H197 each contribute to the heme b site. An a ubiquinone-binding site is contributed by H202. The next 4 membrane-spanning stretches (helical) occupy residues 225–245 (FIIK…LFVY), 289–309 (LGGV…PWIT), 321–341 (LYKK…WIGG), and 348–368 (YVVI…IFIP).

Belongs to the cytochrome b family. As to quaternary structure, the main subunits of complex b-c1 are: cytochrome b, cytochrome c1 and the Rieske protein. It depends on heme b as a cofactor.

The protein resides in the mitochondrion inner membrane. Functionally, component of the ubiquinol-cytochrome c reductase complex (complex III or cytochrome b-c1 complex) that is part of the mitochondrial respiratory chain. The b-c1 complex mediates electron transfer from ubiquinol to cytochrome c. Contributes to the generation of a proton gradient across the mitochondrial membrane that is then used for ATP synthesis. This Cyanidium caldarium (Red alga) protein is Cytochrome b (MT-CYB).